The following is a 425-amino-acid chain: Serine--tRNA ligase (425 aa).

Residue 233–235 (TAE) coordinates L-serine. 264-266 (RRE) is a binding site for ATP. Residue E287 participates in L-serine binding. 351–354 (EISS) is a binding site for ATP. Residue S385 coordinates L-serine.

This sequence belongs to the class-II aminoacyl-tRNA synthetase family. Type-1 seryl-tRNA synthetase subfamily. Homodimer. The tRNA molecule binds across the dimer.

It is found in the cytoplasm. The enzyme catalyses tRNA(Ser) + L-serine + ATP = L-seryl-tRNA(Ser) + AMP + diphosphate + H(+). It catalyses the reaction tRNA(Sec) + L-serine + ATP = L-seryl-tRNA(Sec) + AMP + diphosphate + H(+). Its pathway is aminoacyl-tRNA biosynthesis; selenocysteinyl-tRNA(Sec) biosynthesis; L-seryl-tRNA(Sec) from L-serine and tRNA(Sec): step 1/1. In terms of biological role, catalyzes the attachment of serine to tRNA(Ser). Is also able to aminoacylate tRNA(Sec) with serine, to form the misacylated tRNA L-seryl-tRNA(Sec), which will be further converted into selenocysteinyl-tRNA(Sec). This chain is Serine--tRNA ligase, found in Synechococcus sp. (strain CC9902).